The chain runs to 287 residues: Pantothenate synthetase (287 aa).

37–44 (MGALHEGH) serves as a coordination point for ATP. H44 serves as the catalytic Proton donor. Q68 serves as a coordination point for (R)-pantoate. A beta-alanine-binding site is contributed by Q68. 154 to 157 (GQKD) contacts ATP. (R)-pantoate is bound at residue Q160. ATP is bound by residues V183 and 191–194 (LSSR).

The protein belongs to the pantothenate synthetase family. Homodimer.

Its subcellular location is the cytoplasm. It catalyses the reaction (R)-pantoate + beta-alanine + ATP = (R)-pantothenate + AMP + diphosphate + H(+). It participates in cofactor biosynthesis; (R)-pantothenate biosynthesis; (R)-pantothenate from (R)-pantoate and beta-alanine: step 1/1. Its function is as follows. Catalyzes the condensation of pantoate with beta-alanine in an ATP-dependent reaction via a pantoyl-adenylate intermediate. The chain is Pantothenate synthetase from Leifsonia xyli subsp. xyli (strain CTCB07).